A 121-amino-acid chain; its full sequence is uncharacterized protein (121 aa).

Positions 8–37 form a coiled coil; it reads KQLMVCRDEIKKLKLKEKEAKNRILTYLKN.

This is an uncharacterized protein from Aedes vexans (Inland floodwater mosquito).